The chain runs to 488 residues: Cobyric acid synthase (488 aa).

Positions 248-435 (VLKVVVPVLP…LHGLFESPAA (188 aa)) constitute a GATase cobBQ-type domain. Cys329 acts as the Nucleophile in catalysis. The active site involves His427.

It belongs to the CobB/CobQ family. CobQ subfamily.

The protein operates within cofactor biosynthesis; adenosylcobalamin biosynthesis. Functionally, catalyzes amidations at positions B, D, E, and G on adenosylcobyrinic A,C-diamide. NH(2) groups are provided by glutamine, and one molecule of ATP is hydrogenolyzed for each amidation. The protein is Cobyric acid synthase of Pseudomonas fluorescens (strain Pf0-1).